The sequence spans 275 residues: NH(3)-dependent NAD(+) synthetase (275 aa).

46-53 (GISGGQDS) provides a ligand contact to ATP. Residue Asp-52 coordinates Mg(2+). Arg-140 provides a ligand contact to deamido-NAD(+). Thr-160 is a binding site for ATP. Position 165 (Glu-165) interacts with Mg(2+). Deamido-NAD(+) is bound by residues Lys-173 and Asp-180. The ATP site is built by Lys-189 and Thr-211. A deamido-NAD(+)-binding site is contributed by 260-261 (HK).

It belongs to the NAD synthetase family. Homodimer.

The catalysed reaction is deamido-NAD(+) + NH4(+) + ATP = AMP + diphosphate + NAD(+) + H(+). Its pathway is cofactor biosynthesis; NAD(+) biosynthesis; NAD(+) from deamido-NAD(+) (ammonia route): step 1/1. Functionally, catalyzes the ATP-dependent amidation of deamido-NAD to form NAD. Uses ammonia as a nitrogen source. The polypeptide is NH(3)-dependent NAD(+) synthetase (Salmonella arizonae (strain ATCC BAA-731 / CDC346-86 / RSK2980)).